Here is a 2083-residue protein sequence, read N- to C-terminus: Centriole proteome protein 16 (2083 aa).

The disordered stretch occupies residues 205 to 333; it reads DAPTMDFMPP…PAVPPPLSPS (129 aa). Over residues 227-245 the composition is skewed to low complexity; that stretch reads TAETADTAGAAGRKSLSGA. A compositionally biased stretch (gly residues) spans 246 to 258; it reads SAGGAGPAKGGAK. Low complexity-rich tracts occupy residues 259–274 and 283–292; these read AGAA…SAGA and GSTAGAATPG. Acidic residues predominate over residues 302 to 315; that stretch reads GEEDFEDDLSEDLD. Residues 319–331 are compositionally biased toward pro residues; sequence PLPPSPAVPPPLS. 10 WD repeats span residues 482–523, 526–569, 579–620, 689–726, 728–767, 770–809, 812–853, 856–895, 990–1029, and 1041–1079; these read GHTA…CLAI, AHAS…AAGG, ATEY…GTSV, LHAA…YLLE, EHEG…YTTL, SHCG…QLYE, APGE…LLQE, QHRA…APAQ, VSPL…ALRG, and GHPS…MQQE. Disordered regions lie at residues 1113 to 1141 and 1225 to 1276; these read HTQA…VASA and ALVV…PPPP. Pro residues predominate over residues 1263–1276; sequence VPLPPSPQPLPPPP. 7 WD repeats span residues 1326-1365, 1403-1444, 1448-1486, 1497-1539, 1651-1691, 1736-1781, and 1785-1824; these read GHNR…RAAQ, YHPL…LVAA, EQSP…LEQR, RDPR…QPPQ, GQAA…AEPA, DPLD…QLSW, and RHPA…LVSY. The disordered stretch occupies residues 1713–1743; the sequence is APAHTLRHPPSAAPSSAASSSPLDPLDPLPA. A compositionally biased stretch (low complexity) spans 1720–1743; that stretch reads HPPSAAPSSAASSSPLDPLDPLPA. A disordered region spans residues 1832 to 1870; the sequence is GPTPHSPGGTGRRSPRGAASPPPAPPRPGTGPLQAMAVS. Pro residues predominate over residues 1851–1860; that stretch reads SPPPAPPRPG. One copy of the WD 18 repeat lies at 2035 to 2073; sequence GHAGAVAAASYTGDGGHAVTASGSVLMVWDAAQLLKGVT.

This sequence belongs to the WD repeat WDR90/POC16 family.

It is found in the cytoplasm. The protein resides in the cytoskeleton. The protein localises to the microtubule organizing center. It localises to the centrosome. Its subcellular location is the centriole. Required for flagellum assembly and/or maintenance. This is Centriole proteome protein 16 from Chlamydomonas reinhardtii (Chlamydomonas smithii).